Reading from the N-terminus, the 802-residue chain is Copper-exporting P-type ATPase (802 aa).

2 consecutive HMA domains span residues 5 to 70 (KKTT…YGVA) and 72 to 138 (ETVE…YDAS). The Cu(+) site is built by C16, C19, C83, and C86. The next 6 membrane-spanning stretches (helical) occupy residues 161–181 (LIIS…HLFN), 192–212 (WFQF…FYVG), 224–244 (MDVL…YEMV), 256–276 (LYFE…YLEA), 411–431 (YFVP…ITLV), and 438–458 (PALV…LGLA). Catalysis depends on D495, which acts as the 4-aspartylphosphate intermediate. Residues D690 and D694 each coordinate Mg(2+). 2 consecutive transmembrane segments (helical) span residues 748–767 (LFWA…LGLL) and 771–790 (VAGA…ALRL).

This sequence belongs to the cation transport ATPase (P-type) (TC 3.A.3) family. Type IB subfamily.

The protein localises to the cell membrane. It catalyses the reaction Cu(+)(in) + ATP + H2O = Cu(+)(out) + ADP + phosphate + H(+). Functionally, involved in copper export. This is Copper-exporting P-type ATPase (copA) from Staphylococcus aureus (strain COL).